A 188-amino-acid chain; its full sequence is Methylated-DNA--protein-cysteine methyltransferase (188 aa).

Residues tyrosine 120, glycine 121, and arginine 134 each coordinate DNA. The active-site Nucleophile; methyl group acceptor is cysteine 151. A DNA-binding site is contributed by serine 157.

It belongs to the MGMT family.

The protein localises to the nucleus. The enzyme catalyses a 6-O-methyl-2'-deoxyguanosine in DNA + L-cysteinyl-[protein] = S-methyl-L-cysteinyl-[protein] + a 2'-deoxyguanosine in DNA. It catalyses the reaction a 4-O-methyl-thymidine in DNA + L-cysteinyl-[protein] = a thymidine in DNA + S-methyl-L-cysteinyl-[protein]. Its function is as follows. Involved in the cellular defense against the biological effects of O6-methylguanine (O6-MeG) and O4-methylthymine (O4-MeT) in DNA. Repairs the methylated nucleobase in DNA by stoichiometrically transferring the methyl group to a cysteine residue in the enzyme. This is a suicide reaction: the enzyme is irreversibly inactivated. Prefers double-stranded DNA over single-stranded DNA as substrate. The protein is Methylated-DNA--protein-cysteine methyltransferase (MGT1) of Saccharomyces cerevisiae (strain YJM789) (Baker's yeast).